Consider the following 316-residue polypeptide: N-acetyl-gamma-glutamyl-phosphate reductase (316 aa).

Cysteine 136 is a catalytic residue.

Belongs to the NAGSA dehydrogenase family. Type 1 subfamily.

The protein localises to the cytoplasm. It catalyses the reaction N-acetyl-L-glutamate 5-semialdehyde + phosphate + NADP(+) = N-acetyl-L-glutamyl 5-phosphate + NADPH + H(+). Its pathway is amino-acid biosynthesis; L-arginine biosynthesis; N(2)-acetyl-L-ornithine from L-glutamate: step 3/4. Catalyzes the NADPH-dependent reduction of N-acetyl-5-glutamyl phosphate to yield N-acetyl-L-glutamate 5-semialdehyde. This is N-acetyl-gamma-glutamyl-phosphate reductase from Xanthomonas oryzae pv. oryzae (strain MAFF 311018).